A 289-amino-acid polypeptide reads, in one-letter code: Probable endonuclease 4 (289 aa).

The Zn(2+) site is built by histidine 75, histidine 115, glutamate 153, aspartate 187, histidine 190, histidine 224, aspartate 237, histidine 239, and glutamate 269.

The protein belongs to the AP endonuclease 2 family. It depends on Zn(2+) as a cofactor.

It catalyses the reaction Endonucleolytic cleavage to 5'-phosphooligonucleotide end-products.. In terms of biological role, endonuclease IV plays a role in DNA repair. It cleaves phosphodiester bonds at apurinic or apyrimidinic (AP) sites, generating a 3'-hydroxyl group and a 5'-terminal sugar phosphate. The sequence is that of Probable endonuclease 4 from Chlamydia abortus (strain DSM 27085 / S26/3) (Chlamydophila abortus).